A 388-amino-acid chain; its full sequence is Acyl-CoA dehydrogenase fadE12 (388 aa).

This sequence belongs to the acyl-CoA dehydrogenase family. It depends on FAD as a cofactor.

The enzyme catalyses a 2,3-saturated acyl-CoA + A = a 2,3-dehydroacyl-CoA + AH2. The sequence is that of Acyl-CoA dehydrogenase fadE12 (fadE12) from Mycobacterium bovis (strain ATCC BAA-935 / AF2122/97).